Reading from the N-terminus, the 197-residue chain is ATP-dependent Clp protease proteolytic subunit 1 (197 aa).

The Nucleophile role is filled by Ser88. His113 is a catalytic residue.

Belongs to the peptidase S14 family. In terms of assembly, fourteen ClpP subunits assemble into 2 heptameric rings which stack back to back to give a disk-like structure with a central cavity, resembling the structure of eukaryotic proteasomes.

Its subcellular location is the cytoplasm. The catalysed reaction is Hydrolysis of proteins to small peptides in the presence of ATP and magnesium. alpha-casein is the usual test substrate. In the absence of ATP, only oligopeptides shorter than five residues are hydrolyzed (such as succinyl-Leu-Tyr-|-NHMec, and Leu-Tyr-Leu-|-Tyr-Trp, in which cleavage of the -Tyr-|-Leu- and -Tyr-|-Trp bonds also occurs).. Cleaves peptides in various proteins in a process that requires ATP hydrolysis. Has a chymotrypsin-like activity. Plays a major role in the degradation of misfolded proteins. The protein is ATP-dependent Clp protease proteolytic subunit 1 of Leifsonia xyli subsp. xyli (strain CTCB07).